The following is a 697-amino-acid chain: Semaphorin-2A (697 aa).

Positions 1–20 are cleaved as a signal peptide; the sequence is MAAKLWNLLLVAASVHLVGS. One can recognise a Sema domain in the interval 21-493; the sequence is VEQLHQDLIH…SDNIVRQIEL (473 aa). 2 N-linked (GlcNAc...) asparagine glycosylation sites follow: Asn-63 and Asn-66. Cys-87 and Cys-98 are disulfide-bonded. Residues Asn-132, Asn-198, and Asn-283 are each glycosylated (N-linked (GlcNAc...) asparagine). Disulfide bonds link Cys-260–Cys-367 and Cys-284–Cys-326. The N-linked (GlcNAc...) asparagine glycan is linked to Asn-369. 2 cysteine pairs are disulfide-bonded: Cys-496-Cys-512 and Cys-506-Cys-521. An Ig-like C2-type domain is found at 526 to 634; it reads PGLLQDVTNT…LCSYNITVDA (109 aa). N-linked (GlcNAc...) asparagine glycans are attached at residues Asn-534, Asn-629, and Asn-679. Residues Cys-618 and Cys-654 are joined by a disulfide bond. The span at 673 to 685 shows a compositional bias: polar residues; that stretch reads QCSTKQNNSNQKT. The segment at 673–697 is disordered; it reads QCSTKQNNSNQKTHPNDIFHSNPVA.

It belongs to the semaphorin family. In terms of tissue distribution, expressed in a gradient in the developing limb bud epithelium during Ti pioneer axon outgrowth.

The protein localises to the secreted. Its function is as follows. Acts as a chemorepulsive guidance molecule critical for axon fasciculation and for determining both the initial direction and subsequent pathfinding events of the Ti axon projection. The protein is Semaphorin-2A (SEMA-2A) of Schistocerca gregaria (Desert locust).